The chain runs to 182 residues: Adenine phosphoribosyltransferase (182 aa).

Belongs to the purine/pyrimidine phosphoribosyltransferase family. As to quaternary structure, homodimer.

It is found in the cytoplasm. The catalysed reaction is AMP + diphosphate = 5-phospho-alpha-D-ribose 1-diphosphate + adenine. The protein operates within purine metabolism; AMP biosynthesis via salvage pathway; AMP from adenine: step 1/1. Its function is as follows. Catalyzes a salvage reaction resulting in the formation of AMP, that is energically less costly than de novo synthesis. The protein is Adenine phosphoribosyltransferase of Renibacterium salmoninarum (strain ATCC 33209 / DSM 20767 / JCM 11484 / NBRC 15589 / NCIMB 2235).